A 334-amino-acid chain; its full sequence is Glyceraldehyde-3-phosphate dehydrogenase 2 (334 aa).

NAD(+) is bound by residues Arg-12–Ile-13, Asp-35, and Arg-79. D-glyceraldehyde 3-phosphate-binding positions include Ser-152–Thr-154, Thr-183, Arg-198, Ser-211–Gly-212, and Arg-234. The active-site Nucleophile is Cys-153. NAD(+) is bound at residue Asn-315.

The protein belongs to the glyceraldehyde-3-phosphate dehydrogenase family. Homotetramer.

The protein resides in the cytoplasm. It carries out the reaction D-glyceraldehyde 3-phosphate + phosphate + NAD(+) = (2R)-3-phospho-glyceroyl phosphate + NADH + H(+). It functions in the pathway carbohydrate degradation; glycolysis; pyruvate from D-glyceraldehyde 3-phosphate: step 1/5. With respect to regulation, inhibited by pentalenolactone (PL). Its function is as follows. Catalyzes the oxidative phosphorylation of glyceraldehyde 3-phosphate (G3P) to 1,3-bisphosphoglycerate (BPG) using the cofactor NAD. The first reaction step involves the formation of a hemiacetal intermediate between G3P and a cysteine residue, and this hemiacetal intermediate is then oxidized to a thioester, with concomitant reduction of NAD to NADH. The reduced NADH is then exchanged with the second NAD, and the thioester is attacked by a nucleophilic inorganic phosphate to produce BPG. This Streptomyces arenae protein is Glyceraldehyde-3-phosphate dehydrogenase 2 (gap2).